The primary structure comprises 485 residues: NADH-quinone oxidoreductase subunit N (485 aa).

14 helical membrane-spanning segments follow: residues 8 to 28, 35 to 55, 71 to 91, 105 to 125, 127 to 147, 159 to 179, 203 to 223, 235 to 255, 271 to 291, 297 to 317, 326 to 346, 373 to 393, 408 to 430, and 455 to 475; these read LIAL…MLSI, FLNA…LWFV, GFAM…CTFA, FYLL…ANHL, ALFL…GYAF, YTIL…LVYA, LLAG…LVPF, PAPV…GVVM, VVLG…ALSQ, LLGY…IALQ, VGVY…VVSL, AAVM…LGFI, WWLV…RVAV, and IVVL…QPLI.

This sequence belongs to the complex I subunit 2 family. As to quaternary structure, NDH-1 is composed of 13 different subunits. Subunits NuoA, H, J, K, L, M, N constitute the membrane sector of the complex.

It is found in the cell inner membrane. The enzyme catalyses a quinone + NADH + 5 H(+)(in) = a quinol + NAD(+) + 4 H(+)(out). Its function is as follows. NDH-1 shuttles electrons from NADH, via FMN and iron-sulfur (Fe-S) centers, to quinones in the respiratory chain. The immediate electron acceptor for the enzyme in this species is believed to be ubiquinone. Couples the redox reaction to proton translocation (for every two electrons transferred, four hydrogen ions are translocated across the cytoplasmic membrane), and thus conserves the redox energy in a proton gradient. This chain is NADH-quinone oxidoreductase subunit N, found in Salmonella arizonae (strain ATCC BAA-731 / CDC346-86 / RSK2980).